Consider the following 428-residue polypeptide: Enolase 1 (428 aa).

Glutamine 167 is a (2R)-2-phosphoglycerate binding site. The active-site Proton donor is glutamate 209. Residues aspartate 246, glutamate 288, and aspartate 315 each contribute to the Mg(2+) site. 4 residues coordinate (2R)-2-phosphoglycerate: lysine 340, arginine 369, serine 370, and lysine 391. The active-site Proton acceptor is the lysine 340.

Belongs to the enolase family. In terms of assembly, component of the RNA degradosome, a multiprotein complex involved in RNA processing and mRNA degradation. The cofactor is Mg(2+).

Its subcellular location is the cytoplasm. The protein localises to the secreted. It is found in the cell surface. It carries out the reaction (2R)-2-phosphoglycerate = phosphoenolpyruvate + H2O. It participates in carbohydrate degradation; glycolysis; pyruvate from D-glyceraldehyde 3-phosphate: step 4/5. Functionally, catalyzes the reversible conversion of 2-phosphoglycerate (2-PG) into phosphoenolpyruvate (PEP). It is essential for the degradation of carbohydrates via glycolysis. This Pseudomonas syringae pv. syringae (strain B728a) protein is Enolase 1.